The chain runs to 684 residues: MTYQKKHQHLRIELASPEQIRNWAERVLPNGEIVGQVTKPYTLHYKTHKPEKDGLFCEKIFGPIKSGICACGKYQGIEKKKENIKFCEQCGVEFIESRIRRYRMGYIKLACSVTHVWYLKRLPSYIANLLAKPLKELESLVYCDLFLARPITKKPTLLKLQGLFKYEDQSWKDIFPRFFSPRGFEVFQNREIATGGDAIQKQLTNLNLQNVINLAHLEWKEFAEQKSTGNEWEDRKIQRRKDLLVRRIKLAKHFIQTNIKPEWMVLSLLPVLPPELRPMIELGEGELITSDLNELYRRVIYRNNTLLDFLARSGSTPGGLVVCQKRLVQEAVDALIDNGIRGQPMKDSHNRPYKSFSDLIEGKEGRFRENLLGKRVDYSGRSVIVVGPFLPLHQCGLPREMAIELFQAFVIRGLIGRNFAPNLRAAKTMIQNKEPIIWKVLQEVMQGHPILLNRAPTLHRLGIQAFQPILVNGRAIHLHPLVCGGFNADFDGDQMAVHIPLSLEAQAEARLLMLSHKNLLSPATGEPISVPSQDMLLGLYILTIENNQGIYGNKYNPSKKYDSKKKFSQIPYFSSYDNVFRALQQKQIYLHSSLWLRWQINLRIITLLNQEGPIEIQYKSFGNSFQIYEHYQLRKNKNQEIISTYICTTAGRILFNQQIEEAIQGTYKASLKQKTFVQKIEKNG.

Zn(2+) is bound by residues cysteine 69, cysteine 71, cysteine 87, and cysteine 90. 3 residues coordinate Mg(2+): aspartate 489, aspartate 491, and aspartate 493.

This sequence belongs to the RNA polymerase beta' chain family. RpoC1 subfamily. In plastids the minimal PEP RNA polymerase catalytic core is composed of four subunits: alpha, beta, beta', and beta''. When a (nuclear-encoded) sigma factor is associated with the core the holoenzyme is formed, which can initiate transcription. Mg(2+) is required as a cofactor. The cofactor is Zn(2+).

The protein localises to the plastid. It localises to the chloroplast. It carries out the reaction RNA(n) + a ribonucleoside 5'-triphosphate = RNA(n+1) + diphosphate. DNA-dependent RNA polymerase catalyzes the transcription of DNA into RNA using the four ribonucleoside triphosphates as substrates. The sequence is that of DNA-directed RNA polymerase subunit beta' from Marchantia polymorpha (Common liverwort).